Reading from the N-terminus, the 196-residue chain is Phosphoheptose isomerase (196 aa).

Residues 31–196 (VARQFKAGNK…KAGLEAQIAV (166 aa)) enclose the SIS domain. Residue 46-48 (NGG) coordinates substrate. Positions 55 and 59 each coordinate Zn(2+). Residues E59, 88–89 (ND), 114–116 (STS), S119, and Q166 each bind substrate. Positions 166 and 174 each coordinate Zn(2+).

Belongs to the SIS family. GmhA subfamily. Zn(2+) is required as a cofactor.

Its subcellular location is the cytoplasm. It carries out the reaction 2 D-sedoheptulose 7-phosphate = D-glycero-alpha-D-manno-heptose 7-phosphate + D-glycero-beta-D-manno-heptose 7-phosphate. The protein operates within carbohydrate biosynthesis; D-glycero-D-manno-heptose 7-phosphate biosynthesis; D-glycero-alpha-D-manno-heptose 7-phosphate and D-glycero-beta-D-manno-heptose 7-phosphate from sedoheptulose 7-phosphate: step 1/1. In terms of biological role, catalyzes the isomerization of sedoheptulose 7-phosphate in D-glycero-D-manno-heptose 7-phosphate. The polypeptide is Phosphoheptose isomerase (Crocosphaera subtropica (strain ATCC 51142 / BH68) (Cyanothece sp. (strain ATCC 51142))).